Reading from the N-terminus, the 367-residue chain is uncharacterized protein (367 aa).

The chain crosses the membrane as a helical span at residues 8-28; that stretch reads VLIGTFVLAAILAVFGFIYWL.

The protein resides in the membrane. This is an uncharacterized protein from Bradyrhizobium diazoefficiens (strain JCM 10833 / BCRC 13528 / IAM 13628 / NBRC 14792 / USDA 110).